Reading from the N-terminus, the 593-residue chain is Putative auxin response factor 15 (593 aa).

A DNA-binding region (TF-B3) is located at residues 126-228 (FTKVLTASDI…ELRVGIRRAR (103 aa)). The PB1 domain maps to 511 to 592 (RTCTKVQMQG…MVKRIYIQKR (82 aa)).

Belongs to the ARF family. Homodimers and heterodimers.

It is found in the nucleus. Auxin response factors (ARFs) are transcriptional factors that bind specifically to the DNA sequence 5'-TGTCTC-3' found in the auxin-responsive promoter elements (AuxREs). Could act as transcriptional activator or repressor. Formation of heterodimers with Aux/IAA proteins may alter their ability to modulate early auxin response genes expression. This Arabidopsis thaliana (Mouse-ear cress) protein is Putative auxin response factor 15 (ARF15).